The primary structure comprises 220 residues: Putative cobalt transport protein CbiM (220 aa).

The next 5 membrane-spanning stretches (helical) occupy residues 6 to 26 (GFLP…IVVY), 43 to 63 (ALVA…FPSV), 74 to 94 (GLLV…IVLL), 98 to 118 (LLLA…MGII), and 182 to 202 (IFTL…AAVI).

This sequence belongs to the CbiM family. As to quaternary structure, forms an energy-coupling factor (ECF) transporter complex composed of an ATP-binding protein (A component, CbiO), a transmembrane protein (T component, CbiQ) and 2 possible substrate-capture proteins (S components, CbiM and CbiN) of unknown stoichimetry.

It localises to the cell membrane. It participates in cofactor biosynthesis; adenosylcobalamin biosynthesis. Part of the energy-coupling factor (ECF) transporter complex CbiMNOQ involved in cobalt import. This is Putative cobalt transport protein CbiM from Haloquadratum walsbyi (strain DSM 16790 / HBSQ001).